We begin with the raw amino-acid sequence, 152 residues long: MGALDSLSEYISDYFRVTRKRRKRKVMQTVNIKVKMDCDGCERRVKNAVSSMKGVKSVEVNRKIHKVTVSGYVEPKKVLKRIERTGKKAEIWPYVPYNMVAYPYAVGTYDKKAPAGYVRKSEQSQLQLLPGAPENHYISLFSDENPNACTVM.

The region spanning 27–90 is the HMA domain; that stretch reads MQTVNIKVKM…RIERTGKKAE (64 aa). The Cd(2+) site is built by Cys-38 and Cys-41. Cys-149 bears the Cysteine methyl ester mark. Cys-149 is lipidated: S-farnesyl cysteine. Positions 150-152 are cleaved as a propeptide — removed in mature form; the sequence is TVM.

Belongs to the HIPP family. Interacts with ZHD11/HB29. Expressed in roots, shoot apical meristem, leaves and flowers.

The protein localises to the membrane. In terms of biological role, heavy-metal-binding protein. Binds cadmium. May be involved in cadmium transport and play a role in cadmium detoxification. This Arabidopsis thaliana (Mouse-ear cress) protein is Heavy metal-associated isoprenylated plant protein 20.